Reading from the N-terminus, the 339-residue chain is Longiborneol synthase CLM1 (339 aa).

Polar residues predominate over residues 1 to 17 (MLATPTLSNFDKPSLPS). The interval 1 to 21 (MLATPTLSNFDKPSLPSSEGG) is disordered. The Mg(2+) site is built by Asp112, Asn241, Ser245, and Glu249. The short motif at 241–249 (NDVLSFYKE) is the NDXXSXXXE magnesium-binding motif element.

It belongs to the trichodiene synthase family. Requires Mg(2+) as cofactor. Mn(2+) is required as a cofactor.

It carries out the reaction (2E,6E)-farnesyl diphosphate + H2O = (-)-longiborneol + diphosphate. It functions in the pathway mycotoxin biosynthesis. In terms of biological role, terpene cyclase involved in the biosynthesis of culmorin, a tricyclic sesquiterpene diol reported to have antifungal activity and some phytotoxicity to wheat coleoptile tissue, contributing to Fusarium head blight disease. The terpene cyclase CLM1 is responsible for the cyclization of farnesyl diphosphate into the intermediate longiborneol. Longiborneol is then hydroxylated in a regio- and endo-stereoselective manner at position C-11 by the cytochrome P450 monooxygenase CLM2 to produce culmorin. Additional non-specific oxygenases are also able to hydroxylate longiborneol at other sites than C-11 leading to 3-hydroxylongiborneol, 5-hydroxylongiborneol, 12-hydroxylongiborneol and 15-hydroxylongiborneol. Moreover, another oxygenase capable of installing a C-11 exo-hydroxy group in longiborneol can also yield 11-epi-acetylculmorin. The production of these longiborneol derivatives is dwarfed by the high abundance of culmorin, suggesting that CLM2 displays superior enzymatic activity to the unidentified, possibly promiscuous, additional oxygenases. The sequence is that of Longiborneol synthase CLM1 from Gibberella zeae (strain ATCC MYA-4620 / CBS 123657 / FGSC 9075 / NRRL 31084 / PH-1) (Wheat head blight fungus).